Here is a 156-residue protein sequence, read N- to C-terminus: ATP synthase subunit b (156 aa).

Residues 3-23 form a helical membrane-spanning segment; the sequence is ITLTIFAQALAFAGLIWIVAT.

This sequence belongs to the ATPase B chain family. As to quaternary structure, F-type ATPases have 2 components, F(1) - the catalytic core - and F(0) - the membrane proton channel. F(1) has five subunits: alpha(3), beta(3), gamma(1), delta(1), epsilon(1). F(0) has three main subunits: a(1), b(2) and c(10-14). The alpha and beta chains form an alternating ring which encloses part of the gamma chain. F(1) is attached to F(0) by a central stalk formed by the gamma and epsilon chains, while a peripheral stalk is formed by the delta and b chains.

The protein localises to the cell inner membrane. F(1)F(0) ATP synthase produces ATP from ADP in the presence of a proton or sodium gradient. F-type ATPases consist of two structural domains, F(1) containing the extramembraneous catalytic core and F(0) containing the membrane proton channel, linked together by a central stalk and a peripheral stalk. During catalysis, ATP synthesis in the catalytic domain of F(1) is coupled via a rotary mechanism of the central stalk subunits to proton translocation. In terms of biological role, component of the F(0) channel, it forms part of the peripheral stalk, linking F(1) to F(0). This chain is ATP synthase subunit b, found in Xanthomonas campestris pv. campestris (strain 8004).